We begin with the raw amino-acid sequence, 1318 residues long: DNA-directed RNA polymerase subunit beta' (1318 aa).

Zn(2+)-binding residues include Cys221, Cys295, Cys302, and Cys305.

It belongs to the RNA polymerase beta' chain family. RpoC2 subfamily. In cyanobacteria the RNAP catalytic core is composed of 2 alpha, 1 beta, 1 beta', 1 gamma and 1 omega subunit. When a sigma factor is associated with the core the holoenzyme is formed, which can initiate transcription. Zn(2+) is required as a cofactor.

It carries out the reaction RNA(n) + a ribonucleoside 5'-triphosphate = RNA(n+1) + diphosphate. DNA-dependent RNA polymerase catalyzes the transcription of DNA into RNA using the four ribonucleoside triphosphates as substrates. This chain is DNA-directed RNA polymerase subunit beta', found in Synechococcus elongatus (strain ATCC 33912 / PCC 7942 / FACHB-805) (Anacystis nidulans R2).